The primary structure comprises 229 residues: Putative N-acetylmannosamine-6-phosphate 2-epimerase 2 (229 aa).

This sequence belongs to the NanE family.

It carries out the reaction an N-acyl-D-glucosamine 6-phosphate = an N-acyl-D-mannosamine 6-phosphate. Its pathway is amino-sugar metabolism; N-acetylneuraminate degradation; D-fructose 6-phosphate from N-acetylneuraminate: step 3/5. Its function is as follows. Converts N-acetylmannosamine-6-phosphate (ManNAc-6-P) to N-acetylglucosamine-6-phosphate (GlcNAc-6-P). The polypeptide is Putative N-acetylmannosamine-6-phosphate 2-epimerase 2 (nanE2) (Salmonella typhimurium (strain LT2 / SGSC1412 / ATCC 700720)).